The chain runs to 208 residues: 3-demethoxyubiquinol 3-hydroxylase (208 aa).

6 residues coordinate Fe cation: E57, E87, H90, E139, E171, and H174.

It belongs to the COQ7 family. The cofactor is Fe cation.

Its subcellular location is the cell membrane. It carries out the reaction a 5-methoxy-2-methyl-3-(all-trans-polyprenyl)benzene-1,4-diol + AH2 + O2 = a 3-demethylubiquinol + A + H2O. Its pathway is cofactor biosynthesis; ubiquinone biosynthesis. Catalyzes the hydroxylation of 2-nonaprenyl-3-methyl-6-methoxy-1,4-benzoquinol during ubiquinone biosynthesis. The polypeptide is 3-demethoxyubiquinol 3-hydroxylase (Nitrosospira multiformis (strain ATCC 25196 / NCIMB 11849 / C 71)).